The chain runs to 337 residues: Ketol-acid reductoisomerase (NADP(+)) (337 aa).

The region spanning 3 to 183 (VEVFYDDDAD…GGTRAGAIRT (181 aa)) is the KARI N-terminal Rossmann domain. NADP(+) is bound by residues 26–29 (YGSQ), S52, S54, and 84–87 (DTAQ). Residue H109 is part of the active site. G135 is an NADP(+) binding site. One can recognise a KARI C-terminal knotted domain in the interval 184-329 (TFTEETETDL…SKLRGMMSWV (146 aa)). Mg(2+) contacts are provided by D192, E196, E228, and E232. Residue S253 coordinates substrate.

Belongs to the ketol-acid reductoisomerase family. It depends on Mg(2+) as a cofactor.

It carries out the reaction (2R)-2,3-dihydroxy-3-methylbutanoate + NADP(+) = (2S)-2-acetolactate + NADPH + H(+). The enzyme catalyses (2R,3R)-2,3-dihydroxy-3-methylpentanoate + NADP(+) = (S)-2-ethyl-2-hydroxy-3-oxobutanoate + NADPH + H(+). Its pathway is amino-acid biosynthesis; L-isoleucine biosynthesis; L-isoleucine from 2-oxobutanoate: step 2/4. It functions in the pathway amino-acid biosynthesis; L-valine biosynthesis; L-valine from pyruvate: step 2/4. Involved in the biosynthesis of branched-chain amino acids (BCAA). Catalyzes an alkyl-migration followed by a ketol-acid reduction of (S)-2-acetolactate (S2AL) to yield (R)-2,3-dihydroxy-isovalerate. In the isomerase reaction, S2AL is rearranged via a Mg-dependent methyl migration to produce 3-hydroxy-3-methyl-2-ketobutyrate (HMKB). In the reductase reaction, this 2-ketoacid undergoes a metal-dependent reduction by NADPH to yield (R)-2,3-dihydroxy-isovalerate. This Salinispora arenicola (strain CNS-205) protein is Ketol-acid reductoisomerase (NADP(+)).